Reading from the N-terminus, the 105-residue chain is Mitomycin resistance protein McrB (105 aa).

Involved in mitomycin resistance. May operate with McrA or may be a type of transcriptional activator protein. This chain is Mitomycin resistance protein McrB (mcrB), found in Streptomyces lavendulae.